The primary structure comprises 225 residues: Small ribosomal subunit protein eS1 (225 aa).

It belongs to the eukaryotic ribosomal protein eS1 family.

The protein is Small ribosomal subunit protein eS1 of Methanococcus maripaludis (strain C6 / ATCC BAA-1332).